A 430-amino-acid polypeptide reads, in one-letter code: Keratin, type I cytoskeletal 18 (430 aa).

Ser2 is subject to N-acetylserine. A head region spans residues 2–79 (SFTTRSTFST…GLAGMGGIQN (78 aa)). Phosphoserine occurs at positions 7, 10, 15, and 18. Phosphoserine; alternate occurs at positions 30 and 31. Residues Ser30 and Ser31 are each glycosylated (O-linked (GlcNAc) serine; alternate). A Phosphoserine; by CDK1 modification is found at Ser34. At Tyr36 the chain carries Phosphotyrosine. The residue at position 42 (Ser42) is a Phosphoserine. Arg45 is subject to Omega-N-methylarginine. A Phosphoserine; alternate modification is found at Ser49. An O-linked (GlcNAc) serine; alternate glycan is attached at Ser49. Ser51 is subject to Phosphoserine; by MAPKAPK2 and MAPKAPK3. Position 52 is a phosphothreonine (Thr52). Ser53 carries the phosphoserine; by CAMK, PKC/PRKCE and AURKA modification. Position 55 is an omega-N-methylarginine (Arg55). Ser60 is modified (phosphoserine). A Phosphothreonine modification is found at Thr65. A necessary for interaction with PNN region spans residues 70–373 (GLAGMGGIQN…EALLNIKVKL (304 aa)). The segment at 77 to 128 (IQNEKETMQSLNDRLASYLDRVRSLETENRRLESKIREHLEKKGPQVRDWSH) is interaction with TRADD. A coil 1A region spans residues 80 to 115 (EKETMQSLNDRLASYLDRVRSLETENRRLESKIREH). An IF rod domain is found at 80–391 (EKETMQSLND…RLLEDGEDFN (312 aa)). A Glycyl lysine isopeptide (Lys-Gly) (interchain with G-Cter in SUMO2) cross-link involves residue Lys81. 2 positions are modified to phosphoserine: Ser93 and Ser100. Residues 116 to 132 (LEKKGPQVRDWSHYFKI) form a linker 1 region. Residue Lys131 is modified to N6-acetyllysine. Residues 133–224 (IEDLRAQIFA…KNHEEEVKGL (92 aa)) form a coil 1B region. Ser177 is subject to Phosphoserine. Positions 225–248 (QAQIASSGLTVEVDAPKSQDLAKI) are linker 12. The interval 243–391 (QDLAKIMADI…RLLEDGEDFN (149 aa)) is interaction with DNAJB6. A Glycyl lysine isopeptide (Lys-Gly) (interchain with G-Cter in SUMO2) cross-link involves residue Lys247. The tract at residues 249-387 (MADIRAQYDE…ATYRRLLEDG (139 aa)) is coil 2. At Thr302 the chain carries Phosphothreonine. Phosphoserine is present on residues Ser305, Ser319, and Ser323. Residues Lys370 and Lys372 each participate in a glycyl lysine isopeptide (Lys-Gly) (interchain with G-Cter in SUMO2) cross-link. A tail region spans residues 388–430 (EDFNLGDALDSSNSMQTIQKTTTRRIVDGKVVSETNDTKVLRH). 3 positions are modified to phosphoserine: Ser398, Ser399, and Ser401. Thr404 bears the Phosphothreonine mark. Lys417 is covalently cross-linked (Glycyl lysine isopeptide (Lys-Gly) (interchain with G-Cter in SUMO2)). The residue at position 426 (Lys426) is an N6-acetyllysine; alternate. Residue Lys426 forms a Glycyl lysine isopeptide (Lys-Gly) (interchain with G-Cter in SUMO1); alternate linkage. Lys426 participates in a covalent cross-link: Glycyl lysine isopeptide (Lys-Gly) (interchain with G-Cter in SUMO2); alternate.

The protein belongs to the intermediate filament family. As to quaternary structure, heterotetramer of two type I and two type II keratins. KRT18 associates with KRT8. Interacts with PLEC isoform 1C, when in a heterodimer with KRT8. Interacts with the thrombin-antithrombin complex. Interacts with PNN and mutated CFTR. Interacts with YWHAE, YWHAH and YWHAZ only when phosphorylated. Interacts with DNAJB6, TCHP and TRADD. Interacts with FAM83H. Interacts with EPPK1. Interacts with PKP1 and PKP2. In terms of assembly, (Microbial infection) Interacts with hepatitis C virus/HCV core protein. Post-translationally, phosphorylation at Ser-34 increases during mitosis. Hyperphosphorylated at Ser-53 in diseased cirrhosis liver. Phosphorylation increases by IL-6. Proteolytically cleaved by caspases during epithelial cell apoptosis. Cleavage occurs at Asp-238 by either caspase-3, caspase-6 or caspase-7. In terms of processing, O-GlcNAcylation increases solubility, and decreases stability by inducing proteasomal degradation. Expressed in colon, placenta, liver and very weakly in exocervix. Increased expression observed in lymph nodes of breast carcinoma.

It is found in the nucleus matrix. The protein resides in the cytoplasm. Its subcellular location is the perinuclear region. The protein localises to the nucleus. It localises to the nucleolus. Functionally, involved in the uptake of thrombin-antithrombin complexes by hepatic cells. When phosphorylated, plays a role in filament reorganization. Involved in the delivery of mutated CFTR to the plasma membrane. Together with KRT8, is involved in interleukin-6 (IL-6)-mediated barrier protection. The sequence is that of Keratin, type I cytoskeletal 18 (KRT18) from Homo sapiens (Human).